A 383-amino-acid polypeptide reads, in one-letter code: Chaperone protein DnaJ (383 aa).

Positions 5-70 (DYYDVLGVSK…DKKAAYDRYG (66 aa)) constitute a J domain. A CR-type zinc finger spans residues 142–220 (GMQKTISVPG…CRGAGREEKT (79 aa)). Residues cysteine 155, cysteine 158, cysteine 172, cysteine 175, cysteine 194, cysteine 197, cysteine 208, and cysteine 211 each coordinate Zn(2+). CXXCXGXG motif repeat units follow at residues 155 to 162 (CSACEGTG), 172 to 179 (CPTCSGMG), 194 to 201 (CPTCSGMG), and 208 to 215 (CQACRGAG).

The protein belongs to the DnaJ family. In terms of assembly, homodimer. Zn(2+) is required as a cofactor.

The protein localises to the cytoplasm. In terms of biological role, participates actively in the response to hyperosmotic and heat shock by preventing the aggregation of stress-denatured proteins and by disaggregating proteins, also in an autonomous, DnaK-independent fashion. Unfolded proteins bind initially to DnaJ; upon interaction with the DnaJ-bound protein, DnaK hydrolyzes its bound ATP, resulting in the formation of a stable complex. GrpE releases ADP from DnaK; ATP binding to DnaK triggers the release of the substrate protein, thus completing the reaction cycle. Several rounds of ATP-dependent interactions between DnaJ, DnaK and GrpE are required for fully efficient folding. Also involved, together with DnaK and GrpE, in the DNA replication of plasmids through activation of initiation proteins. The sequence is that of Chaperone protein DnaJ from Dinoroseobacter shibae (strain DSM 16493 / NCIMB 14021 / DFL 12).